The primary structure comprises 207 residues: Outer-membrane lipoprotein LolB (207 aa).

Residues 1-21 (MPLPDFRLIRLLPLAALVLTA) form the signal peptide. Cys-22 carries the N-palmitoyl cysteine lipid modification. A lipid anchor (S-diacylglycerol cysteine) is attached at Cys-22.

The protein belongs to the LolB family. As to quaternary structure, monomer.

It localises to the cell outer membrane. Plays a critical role in the incorporation of lipoproteins in the outer membrane after they are released by the LolA protein. In Shigella boydii serotype 18 (strain CDC 3083-94 / BS512), this protein is Outer-membrane lipoprotein LolB.